We begin with the raw amino-acid sequence, 298 residues long: Protease HtpX homolog (298 aa).

The next 2 helical transmembrane spans lie at valine 14–leucine 34 and tyrosine 39–phenylalanine 59. A Zn(2+)-binding site is contributed by histidine 143. Glutamate 144 is a catalytic residue. Histidine 147 serves as a coordination point for Zn(2+). The next 2 membrane-spanning stretches (helical) occupy residues isoleucine 158 to tryptophan 178 and isoleucine 197 to isoleucine 217. A Zn(2+)-binding site is contributed by glutamate 226.

The protein belongs to the peptidase M48B family. Zn(2+) is required as a cofactor.

The protein resides in the cell membrane. This Streptococcus pyogenes serotype M1 protein is Protease HtpX homolog.